The chain runs to 124 residues: Small ribosomal subunit protein uS12 (124 aa).

The tract at residues 1–32 (MPTISQLIRHGRQKQKKRTKSPALKSSPQRRG) is disordered. Residues 9 to 20 (RHGRQKQKKRTK) are compositionally biased toward basic residues. Position 89 is a 3-methylthioaspartic acid (aspartate 89).

Belongs to the universal ribosomal protein uS12 family. In terms of assembly, part of the 30S ribosomal subunit. Contacts proteins S8 and S17. May interact with IF1 in the 30S initiation complex.

In terms of biological role, with S4 and S5 plays an important role in translational accuracy. Interacts with and stabilizes bases of the 16S rRNA that are involved in tRNA selection in the A site and with the mRNA backbone. Located at the interface of the 30S and 50S subunits, it traverses the body of the 30S subunit contacting proteins on the other side and probably holding the rRNA structure together. The combined cluster of proteins S8, S12 and S17 appears to hold together the shoulder and platform of the 30S subunit. This Leptospira borgpetersenii serovar Hardjo-bovis (strain JB197) protein is Small ribosomal subunit protein uS12.